The sequence spans 2472 residues: MTARGQSPLAPLLETLEDPSASHGGQTDAYLTLTSRMTGEEGKEVITEIEKKLPRLYKVLKTHISSQNSELSSAALQALGFCLYNPKITSELSEANALELLSKLNDTIKNSDKNVRTRALWVISKQTFPSEVVGKMVSSIIDSLEILFNKGETHSAVVDFEALNVIVRLIEQAPIQMGEEAVRWAKLVIPLVVHSAQKVHLRGATALEMGMPLLLQKQQEIASITEQLMTTKLISELQKLFMSKNETYVLKLWPLFVKLLGRTLHRSGSFINSLLQLEELGFRSGAPMIKKIAFIAWKSLIDNFALNPDILCSAKRLKLLMQPLSSIHVRTETLALTKLEVWWYLLMRLGPHLPANFEQVCVPLIQSTISIDSNASPQGNSCHVATSPGLNPMTPVHKGASSPYGAPGTPRMNLSSNLGGMATIPSIQLLGLEMLLHFLLGPEALSFAKQNKLVLSLEPLEHPLISSPSFFSKHANTLITAVHDSFVAVGKDAPDVVVSAIWKELISLVKSVTESGNKKEKPGSEVLTLLLKSLESIVKSEVFPVSKTLVLMEITIKGLPQKVLGSPAYQVANMDILNGTPALFLIQLIFNNFLECGVSDERFFLSLESLVGCVLSGPTSPLAFSDSVLNVINQNAKQLENKEHLWKMWSVIVTPLTELINQTNEVNQGDALEHNFSAIYGALTLPVNHIFSEQRFPVATMKTLLRTWSELYRAFARCAALVATAEENLCCEELSSKIMSSLEDEGFSNLLFVDRIIYIITVMVDCIDFSPYNIKYQPKVKSPQRPSDWSKKKNEPLGKLTSLFKLIVKVIYSFHTLSFKEAHSDTLFTIGNSITGIISSVLGHISLPSMIRKIFATLTRPLALFYENSKLDEVPKVYSCLNNKLEKLLGEIIACLQFSYTGTYDSELLEQLSPLLCIIFLHKNKQIRKQSAQFWNATFAKVMMLVYPEELKPVLTQAKQKFLLLLPGLETVEMMEESSGPYSDGTENSQLNVKISGMERKSNGKRDSFLAQTKNKKENMKPAAKLKLESSSLKVKGEILLEEEKSTDFVFIPPEGKDAKERILTDHQKEVLKTKRCDIPAMYNNLDVSQDTLFTQYSQEEPMEIPTLTRKPKEDSKMMITEEQMDSDIVIPQDVTEDCGMAEHLEKSSLSNNECGSLDKTSPEMSNSNNDERKKALISSRKTSTECASSTENSFVVSSSSVSNTTVAGTPPYPTSRRQTFITLEKFDGSENRPFSPSPLNNISSTVTVKNNQETMIKTDFLPKAKQREGTFSKSDSEKIVNGTKRSSRRAGKAEQTGNKRSKPLMRSEPEKNTEESVEGIVVLENNPPGLLNQTECVSDNQVHLSESTMEHDNTKLKAATVENAVLLETNTVEEKNVEINLESKENTPPVVISADQMVNEDSQVQITPNQKTLRRSSRRRSEVVESTTESQDKENSHQKKERRKEEEKPLQKSPLHIKDDVLPKQKLIAEQTLQENLIEKGSNLHEKTLGETSANAETEQNKKKADPENIKSEGDGTQDIVDKSSEKLVRGRTRYQTRRASQGLLSSIENSESDSSEAKEEGSRKKRSGKWKNKSNESVDIQDQEEKVVKQECIKAENQSHDYKATSEEDVSIKSPICEKQDESNTVICQDSTVTSDLLQVPDDLPNVCEEKNETSKYAEYSFTSLPVPESNLRTRNAIKRLHKRDSFDNCSLGESSKIGISDISSLSEKTFQTLECQHKRSRRVRRSKGCDCCGEKSQPQEKSLIGLKNTENNDVEISETKKADVQAPVSPSETSQANPYSEGQFLDEHHSVNFHLGLKEDNDTINDSLIVSETKSKENTMQESLPSGIVNFREEICDMDSSEAMSLESQESPNENFKTVGPCLGDSKNVSQESLETKEEKPEETPKMELSLENVTVEGNACKVTESNLEKAKTMELNVGNEASFHGQERTKTGISEEAAIEENKRNDDSEADTAKLNAKEVATEEFNSDISLSDNTTPVKLNAQTEISEQTAAGELDGGNDVSDLHSSEETNTKMKNNEEMMIGEAMAETGHDGETENEGITTKTSKPDEAETNMLTAEMDNFVCDTVEMSTEEGIIDANKTETNTEYSKSEEKLDNNQMVMESDILQEDHHTSQKVEEPSQCLASGTAISELIIEDNNASPQKLRELDPSLVSANDSPSGMQTRCVWSPLASPSTSILKRGLKRSQEDEISSPVNKVRRVSFADPIYQAGLADDIDRRCSIVRSHSSNSSPIGKSVKTSPTTQSKHNTTSAKGFLSPGSRSPKFKSSKKCLISEMAKESIPCPTESVYPPLVNCVAPVDIILPQITSNMWARGLGQLIRAKNIKTIGDLSTLTASEIKTLPIRSPKVSNVKKALRIYHEQQVKTRGLEEIPVFDISEKTVNGIENKSLSPDEERLVSDIIDPVALEIPLSKNLLAQISALALQLDSEDLHNYSGSQLFEMHEKLSCMANSVIKNLQSRWRSPSHENSI.

The tract at residues 1–25 (MTARGQSPLAPLLETLEDPSASHGG) is disordered. Residue Ser402 is modified to Phosphoserine. Position 409 is a phosphothreonine (Thr409). Phosphoserine occurs at positions 782, 979, and 1008. Thr1047 carries the post-translational modification Phosphothreonine. The disordered stretch occupies residues 1145–1192 (LEKSSLSNNECGSLDKTSPEMSNSNNDERKKALISSRKTSTECASSTE). Residues 1148–1169 (SSLSNNECGSLDKTSPEMSNSN) are compositionally biased toward polar residues. Ser1162 is subject to Phosphoserine. Thr1220 carries the post-translational modification Phosphothreonine. 2 positions are modified to phosphoserine: Ser1236 and Ser1238. Composition is skewed to basic and acidic residues over residues 1265 to 1279 (AKQR…DSEK) and 1306 to 1315 (MRSEPEKNTE). 3 disordered regions span residues 1265–1318 (AKQR…EESV), 1398–1464 (MVNE…DVLP), and 1479–1587 (IEKG…DQEE). The segment covering 1400–1412 (NEDSQVQITPNQK) has biased composition (polar residues). Ser1422, Ser1454, and Ser1513 each carry phosphoserine. Basic and acidic residues-rich tracts occupy residues 1431–1464 (SQDK…DVLP) and 1500–1530 (EQNK…EKLV). Residue Thr1518 is modified to Phosphothreonine. A phosphoserine mark is found at Ser1542, Ser1552, Ser1554, Ser1556, and Ser1564. A compositionally biased stretch (basic residues) spans 1565 to 1574 (RKKRSGKWKN). A phosphoserine mark is found at Ser1576, Ser1579, Ser1613, Ser1616, Ser1688, Ser1693, Ser1706, and Ser1709. Residues 1762–1782 (TKKADVQAPVSPSETSQANPY) form a disordered region. A compositionally biased stretch (polar residues) spans 1771–1782 (VSPSETSQANPY). Position 1806 is a phosphothreonine (Thr1806). Ser1810 carries the phosphoserine modification. Residues 1846–1859 (AMSLESQESPNENF) are compositionally biased toward polar residues. The disordered stretch occupies residues 1846–1889 (AMSLESQESPNENFKTVGPCLGDSKNVSQESLETKEEKPEETPK). Ser1873 and Ser1876 each carry phosphoserine. Basic and acidic residues predominate over residues 1877-1889 (LETKEEKPEETPK). An interaction with condensed chromosomes in telophase region spans residues 1924–2472 (EASFHGQERT…WRSPSHENSI (549 aa)). Residues Ser1926 and Ser1971 each carry the phosphoserine modification. Positions 1992–2021 (EQTAAGELDGGNDVSDLHSSEETNTKMKNN) are disordered. The span at 2006 to 2021 (SDLHSSEETNTKMKNN) shows a compositional bias: basic and acidic residues. Ser2144 and Ser2161 each carry phosphoserine. Thr2167 carries the phosphothreonine modification. Positions 2170 to 2446 (VWSPLASPST…SGSQLFEMHE (277 aa)) are interaction with ERCC6. Phosphoserine is present on residues Ser2172, Ser2176, Ser2195, Ser2196, and Ser2205. Positions 2227–2255 (RSHSSNSSPIGKSVKTSPTTQSKHNTTSA) are enriched in polar residues. Positions 2227 to 2269 (RSHSSNSSPIGKSVKTSPTTQSKHNTTSAKGFLSPGSRSPKFK) are disordered. 6 positions are modified to phosphoserine: Ser2260, Ser2339, Ser2391, Ser2393, Ser2465, and Ser2471.

This sequence belongs to the RIF1 family. As to quaternary structure, interacts with TP53BP1 (when phosphorylated by ATM). May interact with TRF2. Interacts with SHLD2. Interacts with ERCC6 (via WHD region). Interacts with ASTE1. In terms of tissue distribution, highly expressed in testis.

The protein resides in the nucleus. It localises to the chromosome. It is found in the telomere. The protein localises to the cytoplasm. Its subcellular location is the cytoskeleton. The protein resides in the spindle. Key regulator of TP53BP1 that plays a key role in the repair of double-strand DNA breaks (DSBs) in response to DNA damage: acts by promoting non-homologous end joining (NHEJ)-mediated repair of DSBs. In response to DNA damage, interacts with ATM-phosphorylated TP53BP1. Interaction with TP53BP1 leads to dissociate the interaction between NUDT16L1/TIRR and TP53BP1, thereby unmasking the tandem Tudor-like domain of TP53BP1 and allowing recruitment to DNA DSBs. Once recruited to DSBs, RIF1 and TP53BP1 act by promoting NHEJ-mediated repair of DSBs. In the same time, RIF1 and TP53BP1 specifically counteract the function of BRCA1 by blocking DSBs resection via homologous recombination (HR) during G1 phase. Also required for immunoglobulin class-switch recombination (CSR) during antibody genesis, a process that involves the generation of DNA DSBs. Promotes NHEJ of dysfunctional telomeres. The sequence is that of Telomere-associated protein RIF1 from Homo sapiens (Human).